Here is a 176-residue protein sequence, read N- to C-terminus: Large ribosomal subunit protein uL6 (176 aa).

This sequence belongs to the universal ribosomal protein uL6 family. In terms of assembly, part of the 50S ribosomal subunit.

Its function is as follows. This protein binds to the 23S rRNA, and is important in its secondary structure. It is located near the subunit interface in the base of the L7/L12 stalk, and near the tRNA binding site of the peptidyltransferase center. The protein is Large ribosomal subunit protein uL6 of Burkholderia vietnamiensis (strain G4 / LMG 22486) (Burkholderia cepacia (strain R1808)).